The following is a 229-amino-acid chain: Putative N-acetylmannosamine-6-phosphate 2-epimerase (229 aa).

Belongs to the NanE family.

It catalyses the reaction an N-acyl-D-glucosamine 6-phosphate = an N-acyl-D-mannosamine 6-phosphate. It functions in the pathway amino-sugar metabolism; N-acetylneuraminate degradation; D-fructose 6-phosphate from N-acetylneuraminate: step 3/5. In terms of biological role, converts N-acetylmannosamine-6-phosphate (ManNAc-6-P) to N-acetylglucosamine-6-phosphate (GlcNAc-6-P). The chain is Putative N-acetylmannosamine-6-phosphate 2-epimerase from Shigella sonnei (strain Ss046).